Here is an 873-residue protein sequence, read N- to C-terminus: Polyribonucleotide nucleotidyltransferase (873 aa).

Mg(2+) is bound by residues aspartate 521 and aspartate 527. One can recognise a KH domain in the interval 587 to 646 (PRIITTTVPVDKIGEVIGPKGKMINQIQEDTGAEIAIEDDGTVYISSEGGEAAEKAKQII). Residues 658–730 (GETYKGTVVK…DRGKISLAIP (73 aa)) enclose the S1 motif domain. Positions 727 to 873 (LAIPGFENQE…VRRDFDPFDD (147 aa)) are disordered. A compositionally biased stretch (basic and acidic residues) spans 742–857 (RRSDDRPRRD…EYREGREVRH (116 aa)).

This sequence belongs to the polyribonucleotide nucleotidyltransferase family. Mg(2+) serves as cofactor.

It localises to the cytoplasm. It carries out the reaction RNA(n+1) + phosphate = RNA(n) + a ribonucleoside 5'-diphosphate. Involved in mRNA degradation. Catalyzes the phosphorolysis of single-stranded polyribonucleotides processively in the 3'- to 5'-direction. The protein is Polyribonucleotide nucleotidyltransferase of Bifidobacterium animalis subsp. lactis (strain AD011).